Consider the following 424-residue polypeptide: 3-phosphoshikimate 1-carboxyvinyltransferase (424 aa).

3-phosphoshikimate contacts are provided by lysine 21, serine 22, and arginine 26. A phosphoenolpyruvate-binding site is contributed by lysine 21. Phosphoenolpyruvate-binding residues include glycine 91 and arginine 119. 3-phosphoshikimate contacts are provided by serine 164, glutamine 166, aspartate 310, and lysine 337. Glutamine 166 serves as a coordination point for phosphoenolpyruvate. Aspartate 310 functions as the Proton acceptor in the catalytic mechanism. Residues arginine 341 and arginine 382 each contribute to the phosphoenolpyruvate site.

This sequence belongs to the EPSP synthase family. In terms of assembly, monomer.

The protein resides in the cytoplasm. It carries out the reaction 3-phosphoshikimate + phosphoenolpyruvate = 5-O-(1-carboxyvinyl)-3-phosphoshikimate + phosphate. Its pathway is metabolic intermediate biosynthesis; chorismate biosynthesis; chorismate from D-erythrose 4-phosphate and phosphoenolpyruvate: step 6/7. In terms of biological role, catalyzes the transfer of the enolpyruvyl moiety of phosphoenolpyruvate (PEP) to the 5-hydroxyl of shikimate-3-phosphate (S3P) to produce enolpyruvyl shikimate-3-phosphate and inorganic phosphate. The sequence is that of 3-phosphoshikimate 1-carboxyvinyltransferase from Campylobacter curvus (strain 525.92).